The chain runs to 287 residues: Protease HtpX (287 aa).

The next 2 helical transmembrane spans lie at Ile-4–Ile-24 and Gly-33–Ile-53. Zn(2+) is bound at residue His-139. Residue Glu-140 is part of the active site. His-143 lines the Zn(2+) pocket. 2 helical membrane-spanning segments follow: residues Leu-154–Ile-174 and Ala-195–Phe-215. Glu-220 is a Zn(2+) binding site.

Belongs to the peptidase M48B family. Zn(2+) is required as a cofactor.

It localises to the cell inner membrane. The sequence is that of Protease HtpX from Shewanella sp. (strain ANA-3).